The chain runs to 610 residues: UvrABC system protein C (610 aa).

The 79-residue stretch at 16–94 (SQPGVYRMYD…IKLYQPRYNV (79 aa)) folds into the GIY-YIG domain. The 36-residue stretch at 204 to 239 (QQVLTQLITRMEEASQQLHFEDAARIRDQIQAVRRV) folds into the UVR domain.

This sequence belongs to the UvrC family. As to quaternary structure, interacts with UvrB in an incision complex.

The protein localises to the cytoplasm. Functionally, the UvrABC repair system catalyzes the recognition and processing of DNA lesions. UvrC both incises the 5' and 3' sides of the lesion. The N-terminal half is responsible for the 3' incision and the C-terminal half is responsible for the 5' incision. The polypeptide is UvrABC system protein C (Yersinia pseudotuberculosis serotype O:1b (strain IP 31758)).